The primary structure comprises 343 residues: Dihydroorotase (343 aa).

The Zn(2+) site is built by His13 and His15. Residues 15–17 (HLR) and Asn41 contribute to the substrate site. Lys99, His136, and His174 together coordinate Zn(2+). The residue at position 99 (Lys99) is an N6-carboxylysine. His136 lines the substrate pocket. Residue Leu219 participates in substrate binding. Asp247 lines the Zn(2+) pocket. Asp247 is an active-site residue. His251 and Ala263 together coordinate substrate.

Belongs to the metallo-dependent hydrolases superfamily. DHOase family. Class II DHOase subfamily. In terms of assembly, homodimer. Requires Zn(2+) as cofactor.

It carries out the reaction (S)-dihydroorotate + H2O = N-carbamoyl-L-aspartate + H(+). Its pathway is pyrimidine metabolism; UMP biosynthesis via de novo pathway; (S)-dihydroorotate from bicarbonate: step 3/3. In terms of biological role, catalyzes the reversible cyclization of carbamoyl aspartate to dihydroorotate. This Shewanella sp. (strain ANA-3) protein is Dihydroorotase.